The primary structure comprises 953 residues: TPR repeat-containing protein ZIP4 (953 aa).

The stretch at 129 to 162 (ASFFHRSGLAWLDLGRVDLASACFEKATPLVSAA) is one TPR 1 repeat. Positions 248-269 (AASPSSSSPRTPPYGGATPKTP) are disordered. TPR repeat units follow at residues 432 to 465 (HALLWNCGTEHFRAKNYDTSADLIERSMLYVSRD) and 473 to 506 (ADCFRVLSICHIALQHLDRALEFVNEAYKVEPNI). Positions 924–953 (RVSGDEPDECSQEEAPKASISGSMSQPVLV) are disordered. A compositionally biased stretch (polar residues) spans 943-953 (ISGSMSQPVLV).

It localises to the nucleus. The protein resides in the chromosome. Its function is as follows. Required for crossover formation, complete synapsis of homologous chromosomes and bivalent formation during meiosis. Is specific to recombination events resulting in interference-sensitive crossovers (class I meiotic crossover) and works cooperatively with MER3 to promote crossovers. The protein is TPR repeat-containing protein ZIP4 of Oryza sativa subsp. indica (Rice).